The chain runs to 468 residues: 6-phospho-beta-galactosidase (468 aa).

The D-galactose 6-phosphate site is built by Q19, H116, N159, E160, and N297. Residue E160 is the Proton donor of the active site. The active-site Nucleophile is the E375. 4 residues coordinate D-galactose 6-phosphate: S428, W429, K435, and Y437.

It belongs to the glycosyl hydrolase 1 family.

It catalyses the reaction a 6-phospho-beta-D-galactoside + H2O = D-galactose 6-phosphate + an alcohol. The protein operates within carbohydrate metabolism; lactose degradation; D-galactose 6-phosphate and beta-D-glucose from lactose 6-phosphate: step 1/1. This is 6-phospho-beta-galactosidase from Streptococcus sanguinis (strain SK36).